Consider the following 339-residue polypeptide: N-acetylornithine carbamoyltransferase (339 aa).

Carbamoyl phosphate-binding positions include 49 to 52, tryptophan 77, and arginine 112; that span reads SMRT. Position 144 (glutamate 144) interacts with N(2)-acetyl-L-ornithine. 148–151 lines the carbamoyl phosphate pocket; sequence HPCQ. 2 residues coordinate N(2)-acetyl-L-ornithine: lysine 252 and leucine 295. Residue 294–295 participates in carbamoyl phosphate binding; the sequence is CL. At lysine 302 the chain carries N6-carboxylysine. Arginine 322 lines the carbamoyl phosphate pocket.

Belongs to the aspartate/ornithine carbamoyltransferase superfamily. AOTCase family. In terms of assembly, homotrimer.

The protein resides in the cytoplasm. It catalyses the reaction N(2)-acetyl-L-ornithine + carbamoyl phosphate = N(2)-acetyl-L-citrulline + phosphate + H(+). Its pathway is amino-acid biosynthesis; L-arginine biosynthesis. Carboxylation at Lys-302 increases the catalytic activity of the enzyme. Is potently inhibited by N(alpha)-acetyl-N(delta)-phosphonoacetyl-L-ornithine (PALAO). Catalyzes the transfer of the carbamoyl group from carbamoyl phosphate to the delta-amino group of N(2)-acetyl-L-ornithine to produce N(2)-acetyl-L-citrulline. This is a step in an alternative arginine biosynthesis pathway. The enzyme has no activity with ornithine. The chain is N-acetylornithine carbamoyltransferase from Xanthomonas campestris pv. campestris (strain ATCC 33913 / DSM 3586 / NCPPB 528 / LMG 568 / P 25).